The primary structure comprises 102 residues: Small ribosomal subunit protein uS10 (102 aa).

It belongs to the universal ribosomal protein uS10 family. As to quaternary structure, part of the 30S ribosomal subunit.

Functionally, involved in the binding of tRNA to the ribosomes. This chain is Small ribosomal subunit protein uS10, found in Finegoldia magna (strain ATCC 29328 / DSM 20472 / WAL 2508) (Peptostreptococcus magnus).